Here is a 254-residue protein sequence, read N- to C-terminus: Imidazole glycerol phosphate synthase subunit HisF (254 aa).

Catalysis depends on residues Asp-12 and Asp-131.

Belongs to the HisA/HisF family. Heterodimer of HisH and HisF.

The protein resides in the cytoplasm. It carries out the reaction 5-[(5-phospho-1-deoxy-D-ribulos-1-ylimino)methylamino]-1-(5-phospho-beta-D-ribosyl)imidazole-4-carboxamide + L-glutamine = D-erythro-1-(imidazol-4-yl)glycerol 3-phosphate + 5-amino-1-(5-phospho-beta-D-ribosyl)imidazole-4-carboxamide + L-glutamate + H(+). It functions in the pathway amino-acid biosynthesis; L-histidine biosynthesis; L-histidine from 5-phospho-alpha-D-ribose 1-diphosphate: step 5/9. IGPS catalyzes the conversion of PRFAR and glutamine to IGP, AICAR and glutamate. The HisF subunit catalyzes the cyclization activity that produces IGP and AICAR from PRFAR using the ammonia provided by the HisH subunit. This chain is Imidazole glycerol phosphate synthase subunit HisF, found in Kocuria rhizophila (strain ATCC 9341 / DSM 348 / NBRC 103217 / DC2201).